Reading from the N-terminus, the 112-residue chain is Small ribosomal subunit protein bS16 (112 aa).

The protein belongs to the bacterial ribosomal protein bS16 family.

This Aquifex aeolicus (strain VF5) protein is Small ribosomal subunit protein bS16.